Reading from the N-terminus, the 372-residue chain is MVFPWRCQSAQRGSWSFLKLWIRTLLCCDLLPHHGTHCWTYHYSERSMNWENARKFCKHNYTDLVAIQNKREIEYLEKTLPKNPTYYWIGIRKIGKTWTWVGTNKTLTKEAENWGTGEPNNKKSKEDCVEIYIKRERDSGKWNDDACHKRKAALCYTASCQPESCNRHGECVETINNNTCICDPGYYGPQCQYVIQCEPLKAPELGTMNCIHPLGDFSFQSQCAFNCSEGSELLGNAKTECGASGNWTYLEPICQVIQCMPLAAPDLGTMECSHPLANFSFTSACTFTCSEETDLIGERKTVCRSSGSWSSPSPICQKTKRSFSKIKEGDYNPLFIPVAVMVTAFSGLAFIIWLARRLKKGKKSQERMDDPY.

Residues 1-28 form the signal peptide; that stretch reads MVFPWRCQSAQRGSWSFLKLWIRTLLCC. A propeptide spanning residues 29 to 38 is cleaved from the precursor; it reads DLLPHHGTHC. The Extracellular segment spans residues 39–332; it reads WTYHYSERSM…FSKIKEGDYN (294 aa). Residues 55 to 155 form the C-type lectin domain; the sequence is KFCKHNYTDL…ACHKRKAALC (101 aa). Disulfide bonds link Cys57–Cys155, Cys128–Cys147, Cys128–Cys160, Cys160–Cys171, Cys165–Cys180, Cys182–Cys191, Cys197–Cys241, Cys227–Cys254, Cys259–Cys303, and Cys289–Cys316. N-linked (GlcNAc...) asparagine glycosylation is found at Asn60 and Asn104. The Ca(2+) site is built by Glu118, Asn120, Glu126, Asn143, and Asp144. Residues 156-192 form the EGF-like domain; that stretch reads YTASCQPESCNRHGECVETINNNTCICDPGYYGPQCQ. N-linked (GlcNAc...) asparagine glycosylation is present at Asn177. 2 consecutive Sushi domains span residues 195–256 and 257–318; these read IQCE…ICQV and IQCM…ICQK. N-linked (GlcNAc...) asparagine glycans are attached at residues Asn226, Asn246, and Asn278. A helical transmembrane segment spans residues 333–355; the sequence is PLFIPVAVMVTAFSGLAFIIWLA. Residues 356–372 lie on the Cytoplasmic side of the membrane; sequence RRLKKGKKSQERMDDPY.

This sequence belongs to the selectin/LECAM family. Interaction with SELPLG/PSGL1 and PODXL2 is required for promoting recruitment and rolling of leukocytes. This interaction is dependent on the sialyl Lewis X glycan modification of SELPLG and PODXL2, and tyrosine sulfation modifications of SELPLG. Sulfation on 'Tyr-51' of SELPLG is important for L-selectin binding. In terms of processing, N-glycosylated. Expressed in peripheral blood mononuclear cells (PBMC), spleen and thymus.

It localises to the cell membrane. In terms of biological role, calcium-dependent lectin that mediates cell adhesion by binding to glycoproteins on neighboring cells. Mediates the adherence of lymphocytes to endothelial cells of high endothelial venules in peripheral lymph nodes. Promotes initial tethering and rolling of leukocytes in endothelia. The protein is L-selectin (Sell) of Rattus norvegicus (Rat).